A 215-amino-acid chain; its full sequence is MLQVYLVRHGETEWNVARRIQGQSDSPLTAMGVRQAQQVAERVKSAGITHIISSDLGRTCQTAEIIAQACRCDVITDPRLRELDMGVLEQREIATLNTQEEAWRKSLIDGTPDGRIPQGESMVELANRMQAALNSCLALPEHSRPLLVSHGIALGCLLSTVLGLPAYAERRLRLRNCSISRVDYQNSPWLANGWVIETAGDVSHLTDIALDEVQR.

Substrate contacts are provided by residues 8–15 (RHGETEWN), 21–22 (QG), Arg-58, 82–85 (ELDM), and 151–152 (GI). The active-site Tele-phosphohistidine intermediate is His-9. The active-site Proton donor/acceptor is the Glu-82.

It belongs to the phosphoglycerate mutase family. GpmB subfamily.

The catalysed reaction is (2R)-2-phosphoglycerate = (2R)-3-phosphoglycerate. The protein operates within carbohydrate degradation; glycolysis; pyruvate from D-glyceraldehyde 3-phosphate: step 3/5. In Proteus mirabilis (strain HI4320), this protein is Probable phosphoglycerate mutase GpmB.